The following is a 248-amino-acid chain: UPF0246 protein RC0754 (248 aa).

Belongs to the UPF0246 family.

The chain is UPF0246 protein RC0754 from Rickettsia conorii (strain ATCC VR-613 / Malish 7).